The primary structure comprises 154 residues: Ferredoxin C 1, chloroplastic (154 aa).

Residues 1–56 (MATLPLPTQTSTISLPKPYLSNSFSFPLRNATLSTTTNRRNFLTTGRIIARAYKVV) constitute a chloroplast transit peptide. Residues 57 to 142 (VEHDGKTTEL…DCHIKMIPEE (86 aa)) form the 2Fe-2S ferredoxin-type domain. Positions 89, 94, 97, and 126 each coordinate [2Fe-2S] cluster.

It belongs to the 2Fe2S plant-type ferredoxin family. The cofactor is [2Fe-2S] cluster.

It is found in the plastid. The protein resides in the chloroplast. In terms of biological role, ferredoxins are iron-sulfur proteins that transfer electrons in a wide variety of metabolic reactions. Mediates alternative electron partitioning in conditions of acceptor limitation at photosystem I. Accepts electrons from photosystem I (PSI) and is capable of electron transfer with FNR, but cannot support photoreduction of NADP(+). In Arabidopsis thaliana (Mouse-ear cress), this protein is Ferredoxin C 1, chloroplastic.